Consider the following 285-residue polypeptide: N(G),N(G)-dimethylarginine dimethylaminohydrolase 1 (285 aa).

Alanine 2 carries the post-translational modification N-acetylalanine. Positions 30, 73, 78, 79, 98, and 145 each coordinate substrate. Histidine 173 serves as the catalytic Proton donor. Cysteine 222 carries the S-nitrosocysteine modification. Valine 268 contributes to the substrate binding site. Cysteine 274 carries the post-translational modification S-nitrosocysteine. Cysteine 274 acts as the Nucleophile in catalysis. Cysteine 274 serves as a coordination point for Zn(2+).

Monomer. In terms of tissue distribution, widely distributed, highest concentrations found in brain, brain cortex and kidney (at protein level).

The enzyme catalyses N(omega),N(omega)-dimethyl-L-arginine + H2O = dimethylamine + L-citrulline. It carries out the reaction N(omega)-methyl-L-arginine + H2O = L-citrulline + methylamine. With respect to regulation, copurifies with a tightly bound zinc ion. Activated by release of zinc. His and other agents that promote the release of bound zinc ions activate the enzyme (in vitro). Inhibited by S-nitrosylation. Zinc protects the protein against S-nitrosylation. Functionally, hydrolyzes N(G),N(G)-dimethyl-L-arginine (ADMA) and N(G)-monomethyl-L-arginine (MMA) which act as inhibitors of NOS. Has therefore a role in the regulation of nitric oxide generation. This is N(G),N(G)-dimethylarginine dimethylaminohydrolase 1 (DDAH1) from Bos taurus (Bovine).